Consider the following 416-residue polypeptide: CinA-like protein (416 aa).

It belongs to the CinA family.

This Syntrophomonas wolfei subsp. wolfei (strain DSM 2245B / Goettingen) protein is CinA-like protein.